Consider the following 583-residue polypeptide: Thiol:disulfide interchange protein DsbD (583 aa).

A signal peptide spans 1–18; it reads MRRLFLLLFMLFTTLAHA. Disulfide bonds link Cys118–Cys124 and Cys186–Cys306. A run of 8 helical transmembrane segments spans residues 168 to 188, 214 to 234, 245 to 265, 289 to 309, 326 to 346, 359 to 379, 382 to 402, and 413 to 433; these read GLGLLAFFGFGLLLAFAPCSL, SYVLCMALVYAGMGVIAALLG, WVLGSFAALFVLLSLPMFGFF, LIGCGILGALSALLVGPCMTA, FGGLALFALGLGIGLPLLLLV, WMNLLKGVFGILFLGTAIYML, VLNPGLWMGLWGALALVVAYC, and LLHLFGAGALLFAAWGGMLLV. Residues 458 to 581 enclose the Thioredoxin domain; the sequence is VTAHDAFTTV…FLQRWTQTRE (124 aa). The cysteines at positions 496 and 499 are disulfide-linked.

Belongs to the thioredoxin family. DsbD subfamily.

The protein resides in the cell inner membrane. The enzyme catalyses [protein]-dithiol + NAD(+) = [protein]-disulfide + NADH + H(+). The catalysed reaction is [protein]-dithiol + NADP(+) = [protein]-disulfide + NADPH + H(+). Required to facilitate the formation of correct disulfide bonds in some periplasmic proteins and for the assembly of the periplasmic c-type cytochromes. Acts by transferring electrons from cytoplasmic thioredoxin to the periplasm. This transfer involves a cascade of disulfide bond formation and reduction steps. The sequence is that of Thiol:disulfide interchange protein DsbD from Pseudomonas fluorescens (strain ATCC BAA-477 / NRRL B-23932 / Pf-5).